The following is a 179-amino-acid chain: Large ribosomal subunit protein bL17 (179 aa).

Positions threonine 127–arginine 179 are disordered. A compositionally biased stretch (low complexity) spans alanine 154–proline 168. Positions glutamate 170–arginine 179 are enriched in polar residues.

The protein belongs to the bacterial ribosomal protein bL17 family. In terms of assembly, part of the 50S ribosomal subunit. Contacts protein L32.

In Tropheryma whipplei (strain TW08/27) (Whipple's bacillus), this protein is Large ribosomal subunit protein bL17.